We begin with the raw amino-acid sequence, 431 residues long: MADFKSLGLSKWLTESLRAMKITQPTAIQKACIPKILEGRDCIGGAKTGSGKTIAFAGPMLTKWSEDPSGMFGVVLTPTRELAMQIAEQFTALGSSMNIRVSVIVGGESIVQQALDLQRKPHFIIATPGRLAHHIMSSGDDTVGGLMRAKYLVLDEADILLTSTFADHLATCISALPPKDKRQTLLFTATITDQVKSLQNAPVQKGKPPLFAYQVESVDNVAIPSTLKIEYILVPEHVKEAYLYQLLTCEEYENKTAIIFVNRTMTAEILRRTLKQLEVRVASLHSQMPQQERTNSLHRFRANAARILIATDVASRGLDIPTVELVVNYDIPSDPDVFIHRSGRTARAGRIGDAISFVTQRDVSRIQAIEDRINKKMTETNKVHDTAVIRKALTKVTKAKRESLMAMQKENFGERKRQQKKKQNDGKSLRS.

A Q motif motif is present at residues 2–30 (ADFKSLGLSKWLTESLRAMKITQPTAIQK). One can recognise a Helicase ATP-binding domain in the interval 33-209 (IPKILEGRDC…NAPVQKGKPP (177 aa)). 46 to 53 (AKTGSGKT) contributes to the ATP binding site. A DEAD box motif is present at residues 155–158 (DEAD). The Helicase C-terminal domain occupies 242–389 (YLYQLLTCEE…TNKVHDTAVI (148 aa)). The interval 404 to 431 (LMAMQKENFGERKRQQKKKQNDGKSLRS) is disordered. A compositionally biased stretch (basic and acidic residues) spans 411–431 (NFGERKRQQKKKQNDGKSLRS).

This sequence belongs to the DEAD box helicase family. DDX49/DBP8 subfamily. In terms of assembly, interacts with ESF2.

The protein localises to the nucleus. Its subcellular location is the nucleolus. The catalysed reaction is ATP + H2O = ADP + phosphate + H(+). In terms of biological role, ATP-binding RNA helicase involved in 40S ribosomal subunit biogenesis and is required for the normal formation of 18S rRNAs through pre-rRNA processing at A0, A1 and A2 sites. Required for vegetative growth. The protein is ATP-dependent RNA helicase DBP8 (DBP8) of Saccharomyces cerevisiae (strain YJM789) (Baker's yeast).